Consider the following 391-residue polypeptide: MFQKYRPVWEEINLDNLVYNIGQIKSKIGNKELIGVIKADAYGHGAVEIAKVLLENGVSRLAVAILDEAIELRKNKIKVPIMVLGIIPHAFLDEIMNYDIEPIVPSYSYASKLSKLAESKDKKIKVHIALDTGMGRIGFSIDPNSVEEIGKISKLPNIEIQSLFSHFSTADETDKAYSCEQFKKYKLLYEELVKKNVKINMRTISNSAAIMELPDTYCDLVRPGIIMYGYYPSTEVDKNNLSIKPIMTLKANVVYVKVLESGSYIGYGRKFKCNRKSVIATLPLGYADGYTRRLFGKAKVIINGKFAPVVGNICMDQCMVDVTDVGEVNIGDEVVLIGEKDGLKFNADDIAEITGTISYEVLCMIGRRVPKLYIKGGEVVKIKNYVISSDS.

K38 serves as the catalytic Proton acceptor; specific for D-alanine. K38 carries the N6-(pyridoxal phosphate)lysine modification. R136 is a binding site for substrate. The Proton acceptor; specific for L-alanine role is filled by Y267. M315 contributes to the substrate binding site.

The protein belongs to the alanine racemase family. It depends on pyridoxal 5'-phosphate as a cofactor.

The catalysed reaction is L-alanine = D-alanine. It participates in amino-acid biosynthesis; D-alanine biosynthesis; D-alanine from L-alanine: step 1/1. Catalyzes the interconversion of L-alanine and D-alanine. May also act on other amino acids. In Clostridium kluyveri (strain ATCC 8527 / DSM 555 / NBRC 12016 / NCIMB 10680 / K1), this protein is Alanine racemase (alr).